Here is a 650-residue protein sequence, read N- to C-terminus: 1-deoxy-D-xylulose-5-phosphate synthase (650 aa).

Residues His-73 and 113–115 each bind thiamine diphosphate; that span reads SHA. Asp-145 is a Mg(2+) binding site. Residues 146 to 147, Asn-175, Tyr-287, and Glu-369 each bind thiamine diphosphate; that span reads GA. Asn-175 provides a ligand contact to Mg(2+). The disordered stretch occupies residues 629–650; the sequence is SARPLPEDAERVPMRAEDDEQA. The span at 633–644 shows a compositional bias: basic and acidic residues; it reads LPEDAERVPMRA.

This sequence belongs to the transketolase family. DXPS subfamily. Homodimer. Mg(2+) serves as cofactor. It depends on thiamine diphosphate as a cofactor.

It carries out the reaction D-glyceraldehyde 3-phosphate + pyruvate + H(+) = 1-deoxy-D-xylulose 5-phosphate + CO2. It functions in the pathway metabolic intermediate biosynthesis; 1-deoxy-D-xylulose 5-phosphate biosynthesis; 1-deoxy-D-xylulose 5-phosphate from D-glyceraldehyde 3-phosphate and pyruvate: step 1/1. Its function is as follows. Catalyzes the acyloin condensation reaction between C atoms 2 and 3 of pyruvate and glyceraldehyde 3-phosphate to yield 1-deoxy-D-xylulose-5-phosphate (DXP). In Clavibacter sepedonicus (Clavibacter michiganensis subsp. sepedonicus), this protein is 1-deoxy-D-xylulose-5-phosphate synthase.